Reading from the N-terminus, the 87-residue chain is MAGTVAVPEGITNPPIDELLKVCDNKYALVIYAAKRARQINAYYAQLGEGLLEYVGPLVETYPTEKPLSIALREINAGLLTAEPIEQ.

The protein belongs to the RNA polymerase subunit omega family. As to quaternary structure, the RNAP catalytic core consists of 2 alpha, 1 beta, 1 beta' and 1 omega subunit. When a sigma factor is associated with the core the holoenzyme is formed, which can initiate transcription.

The enzyme catalyses RNA(n) + a ribonucleoside 5'-triphosphate = RNA(n+1) + diphosphate. Promotes RNA polymerase assembly. Latches the N- and C-terminal regions of the beta' subunit thereby facilitating its interaction with the beta and alpha subunits. This Acidothermus cellulolyticus (strain ATCC 43068 / DSM 8971 / 11B) protein is DNA-directed RNA polymerase subunit omega.